Consider the following 610-residue polypeptide: Butyryl-CoA dehydrogenase Swol_2052 (610 aa).

Glu451 functions as the Proton acceptor in the catalytic mechanism.

The protein belongs to the acyl-CoA dehydrogenase family. It depends on FAD as a cofactor.

It localises to the cytoplasm. The enzyme catalyses butanoyl-CoA + oxidized [electron-transfer flavoprotein] + H(+) = (2E)-butenoyl-CoA + reduced [electron-transfer flavoprotein]. The catalysed reaction is a short-chain 2,3-saturated fatty acyl-CoA + oxidized [electron-transfer flavoprotein] + H(+) = a short-chain (2E)-enoyl-CoA + reduced [electron-transfer flavoprotein]. The protein operates within lipid metabolism; butanoate metabolism. Involved in syntrophic growth of S.wolfei with butyrate, as part of the butyrate oxidation pathway. Catalyzes the oxidation of butanoyl-CoA to crotonyl-CoA. Probably passes the electrons released by this reaction on to electron-transfer flavoproteins (EtfAB) to finally generate hydrogen and/or formate. The sequence is that of Butyryl-CoA dehydrogenase Swol_2052 from Syntrophomonas wolfei subsp. wolfei (strain DSM 2245B / Goettingen).